The chain runs to 305 residues: Protein-methionine-sulfoxide reductase catalytic subunit MsrP (305 aa).

Residues Met1–Ala54 constitute a signal peptide (tat-type signal). Mo-molybdopterin contacts are provided by residues Asn69, Tyr72–Glu73, Cys126, Thr161, Asn209, Arg214, and Ser225–Lys227.

It belongs to the MsrP family. In terms of assembly, heterodimer of a catalytic subunit (MsrP) and a heme-binding subunit (MsrQ). The cofactor is Mo-molybdopterin. Post-translationally, predicted to be exported by the Tat system. The position of the signal peptide cleavage has not been experimentally proven.

The protein resides in the periplasm. The catalysed reaction is L-methionyl-[protein] + a quinone + H2O = L-methionyl-(S)-S-oxide-[protein] + a quinol. It carries out the reaction L-methionyl-[protein] + a quinone + H2O = L-methionyl-(R)-S-oxide-[protein] + a quinol. In terms of biological role, part of the MsrPQ system that repairs oxidized periplasmic proteins containing methionine sulfoxide residues (Met-O), using respiratory chain electrons. Thus protects these proteins from oxidative-stress damage caused by reactive species of oxygen and chlorine generated by the host defense mechanisms. MsrPQ is essential for the maintenance of envelope integrity under bleach stress, rescuing a wide series of structurally unrelated periplasmic proteins from methionine oxidation. The catalytic subunit MsrP is non-stereospecific, being able to reduce both (R-) and (S-) diastereoisomers of methionine sulfoxide. The chain is Protein-methionine-sulfoxide reductase catalytic subunit MsrP from Chromobacterium violaceum (strain ATCC 12472 / DSM 30191 / JCM 1249 / CCUG 213 / NBRC 12614 / NCIMB 9131 / NCTC 9757 / MK).